The primary structure comprises 117 residues: UPF0344 protein GK0697 (117 aa).

A run of 4 helical transmembrane segments spans residues 1-21 (MTHA…LAVS), 39-59 (LFYI…ASIS), 60-80 (ALYW…EMVL), and 97-117 (VIAL…FDLF).

Belongs to the UPF0344 family.

It localises to the cell membrane. The polypeptide is UPF0344 protein GK0697 (Geobacillus kaustophilus (strain HTA426)).